A 160-amino-acid polypeptide reads, in one-letter code: Small ribosomal subunit protein bS16 (160 aa).

Residues 115 to 139 are disordered; that stretch reads GGPTTEATRPKKKVSAKKAAKAVES. The segment covering 124–134 has biased composition (basic residues); that stretch reads PKKKVSAKKAA.

The protein belongs to the bacterial ribosomal protein bS16 family.

The chain is Small ribosomal subunit protein bS16 from Mycobacterium leprae (strain Br4923).